We begin with the raw amino-acid sequence, 138 residues long: 1,4-dihydroxy-2-naphthoyl-CoA hydrolase (138 aa).

Asp-13 is an active-site residue.

This sequence belongs to the 4-hydroxybenzoyl-CoA thioesterase family. DHNA-CoA hydrolase subfamily.

The catalysed reaction is 1,4-dihydroxy-2-naphthoyl-CoA + H2O = 1,4-dihydroxy-2-naphthoate + CoA + H(+). Its pathway is cofactor biosynthesis; phylloquinone biosynthesis. It functions in the pathway quinol/quinone metabolism; 1,4-dihydroxy-2-naphthoate biosynthesis; 1,4-dihydroxy-2-naphthoate from chorismate: step 7/7. Catalyzes the hydrolysis of 1,4-dihydroxy-2-naphthoyl-CoA (DHNA-CoA) to 1,4-dihydroxy-2-naphthoate (DHNA), a reaction involved in phylloquinone (vitamin K1) biosynthesis. The protein is 1,4-dihydroxy-2-naphthoyl-CoA hydrolase of Microcystis aeruginosa (strain NIES-843 / IAM M-2473).